A 443-amino-acid chain; its full sequence is MFLAQEIIRKKRNAEVLSTEEIQFFVNGITNNTVSEGQIAALGMAVYFNDMNMDERIALTTSMRDSGTVLDWKSLDLNGPIIDKHSTGGVGDVISLMLGPMAAACGGYVPMISGRGLGHTGGTLDKFDAIPGYNTEPDSALFRKVVKEAGVAIIGQTGDLVPADKRFYSIRDNTATVESISLITASILSKKLAAGLDALAMDVKVGTGAFMPTYEASEELARSITAVANGAGTKTTALLTDMNQVLASCAGNAVEVKEAVDFMTGAYRNPRLYEVTMGLCAEMLTLGGIASNEAEARAKLNEVLDNGKAAEIFGRMVSGLGGPTDFVENYSKYLPDSQIIRPVYAEQTGFATAMDTRELGLAVVTLGGGRRKPGDTLDYSVGLTKVCALGDEVSADKPIAFIHAQSEGAFAEAEAAVKKAIHIGDTKPEKTPEIYRYIRESDL.

It belongs to the thymidine/pyrimidine-nucleoside phosphorylase family. Homodimer.

It carries out the reaction thymidine + phosphate = 2-deoxy-alpha-D-ribose 1-phosphate + thymine. It participates in pyrimidine metabolism; dTMP biosynthesis via salvage pathway; dTMP from thymine: step 1/2. Its function is as follows. The enzymes which catalyze the reversible phosphorolysis of pyrimidine nucleosides are involved in the degradation of these compounds and in their utilization as carbon and energy sources, or in the rescue of pyrimidine bases for nucleotide synthesis. This is Thymidine phosphorylase from Shewanella piezotolerans (strain WP3 / JCM 13877).